The sequence spans 2611 residues: Highly reducing polyketide synthase ATEG_07659 (2611 aa).

One can recognise a Ketosynthase family 3 (KS3) domain in the interval 10 to 409 (SEPIAIIGLS…GTNSHVIVEG (400 aa)). Residues Cys-157, His-292, and His-330 each act as for beta-ketoacyl synthase activity in the active site. A malonyl-CoA:ACP transacylase (MAT) domain region spans residues 537–844 (MVFTGQGAQW…VRFVEAFTDM (308 aa)). The tract at residues 969–1109 (HDLLGVLVPG…GLITVQMAAD (141 aa)) is N-terminal hotdog fold. The region spanning 969-1292 (HDLLGVLVPG…CQSLGRSAPG (324 aa)) is the PKS/mFAS DH domain. The interval 970 to 1289 (DLLGVLVPGT…GLVCQSLGRS (320 aa)) is dehydratase (DH) domain. His-1001 functions as the Proton acceptor; for dehydratase activity in the catalytic mechanism. Residues 1128–1292 (GYTRRIDPQD…CQSLGRSAPG (165 aa)) form a C-terminal hotdog fold region. Asp-1199 (proton donor; for dehydratase activity) is an active-site residue. A methyltransferase (CMet) domain region spans residues 1469 to 1602 (FGQLKSLLAA…GATLLLMETT (134 aa)). An enoyl reductase (ER) domain region spans residues 1898–2213 (GLLDTLAFGD…TGKHLGKLVL (316 aa)). A ketoreductase (KR) domain region spans residues 2236 to 2416 (ASYLLVGGVG…AVSLDMGVIK (181 aa)). Over residues 2499–2509 (SRAQAQQAGGD) the composition is skewed to low complexity. The tract at residues 2499–2520 (SRAQAQQAGGDSDSEPLSAKLR) is disordered. The region spanning 2527-2604 (AAARCVGDAI…ALALDVVAKS (78 aa)) is the Carrier domain. Ser-2564 bears the O-(pantetheine 4'-phosphoryl)serine mark.

Its pathway is secondary metabolite biosynthesis. Functionally, highly reducing polyketide synthase; part of the cluster B that mediates the biosynthesis of azasperpyranones, members of the azaphilone family that exhibit anti-cancer activities. Azasperpyranones are synthesized by 2 clusters, A and B. Cluster A is responsible for the production of the polyhydric phenol moiety while the azaphilonoid scaffold is produced by the cluster B. The non-reducing polyketide synthase ATEG_03629 produces 5-methyl orsellinic acid, which is then reduced to 5-methyl orsellinic aldehyde by the NRPS-like protein ATEG_03630. 5-methyl orsellinic aldehyde is then first hydroxylated by the FAD-dependent monooxygenase ATEG_03635 and subsequently hydroxylated by the cytochrome P450 monooxygenase ATEG_03631 to produce the unstable polyhydric phenol precursor of azasperpyranones. On the other hand, the polyketide synthase ATEG_07659 is responsible for producing the 3,5-dimethyloctadienone moiety from acetyl-CoA, three malonyl-CoA, and two S-adenosyl methionines (SAM). The 3,5-dimethyloctadienone moiety is then loaded onto the SAT domain of ATEG_07661 and extended with four malonyl-CoA and one SAM, which leads to the formation of 2,4-dihydroxy-6-(5,7-dimethyl-2-oxo-trans-3-trans-5-nonadienyl)-3-methylbenzaldehyde (compound 8) after reductive release and aldol condensation. The FAD-dependent monooxygenase ATEG_07662 is the next enzyme in the biosynthesis sequence and hydroxylates the side chain at the benzylic position of compound 8. In Aspergillus nidulans, afoF, the ortholog of the FAD-dependent oxygenase ATEG_07660, is the key enzyme for the biosynthesis of asperfuranone by catalyzing the hydroxylation at C-8 of to prevent the formation of a six-membered ring hemiacetal intermediate and thus facilitating the formation of a five-membered ring to produce asperfuranone. In Aspergillus terreus, ATEG_07660 is probably not functional, which leads to the formation of the six-membered ring hemiacetal intermediate presperpyranone instead of asperfuranone. Finally, ATEG_03636 is involved in the condensation of the polyhydric phenol moiety produced by cluster A and the perasperpyranone precursor produced by cluster B, to yield azasperpyranone A. Further modifications of azasperpyranone A result in the production of derivatives, including azasperpyranone B to F. The sequence is that of Highly reducing polyketide synthase ATEG_07659 from Aspergillus terreus (strain NIH 2624 / FGSC A1156).